Consider the following 201-residue polypeptide: UPF0301 protein Rleg2_0617 (201 aa).

This sequence belongs to the UPF0301 (AlgH) family.

The sequence is that of UPF0301 protein Rleg2_0617 from Rhizobium leguminosarum bv. trifolii (strain WSM2304).